A 402-amino-acid polypeptide reads, in one-letter code: Zinc finger protein 587B (402 aa).

The KRAB domain maps to 15 to 91; sequence VTFEDVAVKF…PVTGVSPKKA (77 aa). The C2H2-type 1 zinc finger occupies 92-114; it reads HPCEMCGPILGDILHVADHQGTH. Residues 120-142 form a C2H2-type 2; degenerate zinc finger; sequence HRCEAWGNKLYDSGNFHQHQNEH. Glycyl lysine isopeptide (Lys-Gly) (interchain with G-Cter in SUMO2) cross-links involve residues Lys177, Lys200, and Lys253. 5 C2H2-type zinc fingers span residues 242–264, 270–292, 298–320, 326–348, and 354–383; these read YVCCECGKSFSKYVSFSNHQRVH, YECGECEKSFSQKSSLIQHQQFH, YGCEECGKYFSLEGYLRRHQKVH, YECGECGKSFSSNVNLKSHQRIH, and YKCGECEKSFSRKPSLSYHQRFGRPRWVDH. Residue Lys366 forms a Glycyl lysine isopeptide (Lys-Gly) (interchain with G-Cter in SUMO2) linkage.

It belongs to the krueppel C2H2-type zinc-finger protein family.

It is found in the nucleus. May be involved in transcriptional regulation. In Homo sapiens (Human), this protein is Zinc finger protein 587B (ZNF587B).